Here is a 43-residue protein sequence, read N- to C-terminus: Neurotrophin-4 (43 aa).

Belongs to the NGF-beta family.

Its function is as follows. NT-4 could play a role in oogenesis and/or early embryogenesis. NT-4 interacts with the low affinity NGF receptor and elicits neurite outgrowth from explanted dorsal root ganglia with no and lower activity in sympathetic and nodose ganglia, respectively. This is Neurotrophin-4 (NTF4) from Macrovipera lebetinus (Levantine viper).